A 1295-amino-acid polypeptide reads, in one-letter code: MTQSPVQPPPPLPAQPHSAAGGVIRGDVQVRCAGCRVILRVKTGVVEFSCPTCQLPQMLPPELLSRARPQFPQSPQQPPQPIQTLPPPIQQQLKPLNLPRPPVPAHGIDPTKMQLPCANCQAILNVPHGLTRFSCPQCHVELAVDVSKLNRSLTASQSHSNPPTPAAPTVPPPPPPEEVNEEAIEVEREEDEGGTAGETFMDYRPPKLSIGPPHPDPIVETSSLSAVQPPEPTYDLKIKEELERSKALSCLQIETLVYACQRHLQHLADGTRAGFFVGDGAGVGKGRTIAGLIWENWKHGRRKALWISIGSDLKYDARRDLDDVGATCVGVNPLNKLPYSKLDSKNVGIKEGVVFLTYNSLIASSEKGRSRLQQLVQWCGPEFDGLLIFDECHKAKNLVPEAGSQPTRIGQAVVDIQDKIPQARVIYCSATGASEPRNMGYMVRLGLWGAGTSFSDFNKFLGALDKGGTGALELVAMDMKARGMYVCRTLSYKGAEFEIVEARLEAGMEAMYNKSAEFWAELRIELLSASAFLPNEKPNSSQLWRLYWSSHQRFFRHLCMSAKVPVTVRLAKKALSTNKCVVIGLQSTGEARTEEAVNKYGLELDDFVSGPRELLLKFVEENYPLPEQPEPLSEDDSVKELQRKRHSASPGVSIRGRVRKMAKWKPDSDNESDLESEADSADDSNDSDDEFQICQICSGEDERKKLLHCSECDKLFHPDCVVPPVIDLPSEAWICFSCKEKTEEYIQARRLYIAELQKRYEAALERKSKIIEIIRSLNLPNNPLDDIVDQLGGPEKVAEMTGRRGMLVRASNGKGVTYQARNTKDITMEMVNMHEKQLFMDGKKLVAIISEAGSAGVSLQADRRAVNQKRRVHLTLELPWSADRAIQQFGRTHRSNQTSAPEYRLLFTNLGGERRFASIVAKRLETLGALTQGDRRAGPSGPSLSAYNYDSNFGKKSLMVMYRGIMEQEKLPVLPPGCSIDEPETVKEFLTKARAALVAVGIVRDSVLANGKDVGRFSGRIIDSDMHDVGRFLNRLLGLPPDIQNRLFELFTSILDVLVHNARIEGSFDSGIVDMKANSVELLSTPKTVHVDQMSGASTMLFTFTLDRGVTWESASSMLEGKRRDGLGSANDGFFESKREWLGRRHFILAFESAASGLFKIVRPAVGESIREMSLSELKTKYRKLSSLEKARTGWEDEYEVSSKQCMHGPKCKLGEYCTVGRRIQEVNVVGGLILPIWGTIEKALSKQARHSHKRIRVIRIETTTDNQRIVGLSIPNAAVETVLQDLAWVQEIDD.

Composition is skewed to pro residues over residues methionine 1–alanine 14, proline 75–isoleucine 89, and proline 162–glutamate 177. Disordered regions lie at residues methionine 1 to alanine 20, arginine 68 to glycine 107, leucine 153 to arginine 204, and proline 626 to aspartate 688. Acidic residues predominate over residues glutamate 178 to glycine 193. Positions arginine 643–proline 650 match the Nuclear localization signal motif. Acidic residues predominate over residues aspartate 669–aspartate 688. The PHD-type zinc-finger motif lies at phenylalanine 691–lysine 741.

Belongs to the SBNO family. As to quaternary structure, interacts with SWI/SNF and ISWI chromatin remodelers such as BRM, CHR11 and CHR17. Binds to histone H3.

The protein resides in the nucleus. Required for normal embryo development. Necessary to acquire heat stress (HS) memory, by modulating nucleosome occupancy and regulating heat-induced gene expression. Associates globally with the nucleosome-poor regions flanking the transcription units of expressed genes. Binds to the promoter regions, primarily to the proximal promoter just upstream of the transcriptional start sites (TSS) and somewhat more weakly to the region downstream of the transcription termination site (TTS), of actively expressed genes (e.g. HSA32, HSP18.2 and HSP22.0) in a heat-dependent fashion. This is Protein FORGETTER 1 from Arabidopsis thaliana (Mouse-ear cress).